The chain runs to 94 residues: MARRCEVTGRGTVSGNNVSHSHIKTRRTWKVNLIKKRIFLEDENRWVTIRLSTRALRTLRKKGIKAAIKDNGGSLGVLAPKKYAGITKQALKKA.

A disordered region spans residues 1–21 (MARRCEVTGRGTVSGNNVSHS). Polar residues predominate over residues 11 to 20 (GTVSGNNVSH).

Belongs to the bacterial ribosomal protein bL28 family.

The sequence is that of Large ribosomal subunit protein bL28 from Leptospira borgpetersenii serovar Hardjo-bovis (strain JB197).